The following is a 121-amino-acid chain: CRISPR system Cms protein Csm2 (121 aa).

The protein belongs to the CRISPR-associated Csm2 family. Part of the Csm effector complex that includes at least Cas10(1), Csm2(3), Csm3(5), Csm4(1), Csm5(1) and mature crRNA. The Csm complex is elongated and slightly twisted with a maximal length of 215 Angstroms and a diameter of 75-80 Angstroms. It has been modeled to have a central protein filamant of Csm3 subunits along which the dsRNA helix of paired crRNA and target RNA binds. The filament is capped at one end by Cas10 and Csm4 and at the other end by Csm5; ssDNA is thought to bind to the N-terminal HD domain of Cas10. Csm with a precursor crRNA does not include Csm5, while Cas6, the enzyme probably involved in pre-crRNA processing, is found associated with a subset of the Csm complex.

In terms of biological role, CRISPR (clustered regularly interspaced short palindromic repeat) is an adaptive immune system that provides protection against mobile genetic elements (viruses, transposable elements and conjugative plasmids). CRISPR clusters contain spacers, sequences complementary to antecedent mobile elements, and target invading nucleic acids. CRISPR clusters are transcribed and processed into CRISPR RNA (crRNA). The type III-A Csm effector complex binds crRNA and acts as a crRNA-guided RNase, DNase and cyclic oligoadenylate synthase; binding of target RNA cognate to the crRNA is required for all activities. In a heterologous host this Csm effector complex restricts ssRNA phage MS2, suggesting it may target RNA viruses in vivo. Csm functions as a non-specific ssDNase. Base-pairing between crRNA and target RNA to form a ternary Csm complex activates a ssDNase activity; target RNA cleavage suppresses the ssDNase, a temporal control that prevents uncontrolled DNA degradation. Viral RNA transcripts probably tether the Csm complex to the viral genome, recruiting Cas10 ssDNA activity which is able to degrade DNA in the transcription bubble, spatially controlling the DNase activity. Functionally, this subunit may be involved in monitoring complementarity of crRNA and target RNA. This chain is CRISPR system Cms protein Csm2, found in Streptococcus thermophilus.